A 117-amino-acid polypeptide reads, in one-letter code: Ig heavy chain V-A2 region K-25 (117 aa).

Pyrrolidone carboxylic acid is present on Gln1. An Ig-like domain is found at 1-106 (QSVKESEGGL…GLSYLKSSVD (106 aa)). The cysteines at positions 21 and 91 are disulfide-linked.

The sequence is that of Ig heavy chain V-A2 region K-25 from Oryctolagus cuniculus (Rabbit).